The primary structure comprises 734 residues: Photosystem I P700 chlorophyll a apoprotein A2 (734 aa).

Helical transmembrane passes span 46 to 69, 135 to 158, 175 to 199, 273 to 291, 330 to 353, 369 to 395, 417 to 439, and 517 to 535; these read IFAS…FHVA, LYNG…LHLQ, LNHH…HVAI, IAHH…GHMY, LHFQ…QHMY, AALY…IFFI, AIIS…LYVH, and FLVH…LILV. [4Fe-4S] cluster contacts are provided by Cys-559 and Cys-568. 2 helical membrane passes run 575–596 and 643–665; these read AFYL…YWHW and LSVW…MFLI. His-654, Met-662, and Tyr-670 together coordinate chlorophyll a. A phylloquinone-binding site is contributed by Trp-671. Residues 707-727 form a helical membrane-spanning segment; the sequence is LVGLAHFSVGYIFTYAAFLIA.

The protein belongs to the PsaA/PsaB family. In terms of assembly, the PsaA/B heterodimer binds the P700 chlorophyll special pair and subsequent electron acceptors. PSI consists of a core antenna complex that captures photons, and an electron transfer chain that converts photonic excitation into a charge separation. The eukaryotic PSI reaction center is composed of at least 11 subunits. P700 is a chlorophyll a/chlorophyll a' dimer, A0 is one or more chlorophyll a, A1 is one or both phylloquinones and FX is a shared 4Fe-4S iron-sulfur center. is required as a cofactor.

It localises to the plastid. The protein localises to the chloroplast thylakoid membrane. The enzyme catalyses reduced [plastocyanin] + hnu + oxidized [2Fe-2S]-[ferredoxin] = oxidized [plastocyanin] + reduced [2Fe-2S]-[ferredoxin]. PsaA and PsaB bind P700, the primary electron donor of photosystem I (PSI), as well as the electron acceptors A0, A1 and FX. PSI is a plastocyanin-ferredoxin oxidoreductase, converting photonic excitation into a charge separation, which transfers an electron from the donor P700 chlorophyll pair to the spectroscopically characterized acceptors A0, A1, FX, FA and FB in turn. Oxidized P700 is reduced on the lumenal side of the thylakoid membrane by plastocyanin. This chain is Photosystem I P700 chlorophyll a apoprotein A2, found in Marchantia polymorpha (Common liverwort).